The primary structure comprises 428 residues: Enolase (428 aa).

Gln-163 contributes to the (2R)-2-phosphoglycerate binding site. Glu-205 functions as the Proton donor in the catalytic mechanism. Mg(2+) contacts are provided by Asp-242, Glu-285, and Asp-312. Lys-337, Arg-366, Ser-367, and Lys-388 together coordinate (2R)-2-phosphoglycerate. Residue Lys-337 is the Proton acceptor of the active site.

This sequence belongs to the enolase family. Mg(2+) is required as a cofactor.

The protein resides in the cytoplasm. It is found in the secreted. The protein localises to the cell surface. It carries out the reaction (2R)-2-phosphoglycerate = phosphoenolpyruvate + H2O. Its pathway is carbohydrate degradation; glycolysis; pyruvate from D-glyceraldehyde 3-phosphate: step 4/5. In terms of biological role, catalyzes the reversible conversion of 2-phosphoglycerate (2-PG) into phosphoenolpyruvate (PEP). It is essential for the degradation of carbohydrates via glycolysis. This is Enolase from Rhodopirellula baltica (strain DSM 10527 / NCIMB 13988 / SH1).